The primary structure comprises 121 residues: Large ribosomal subunit protein eL8 (121 aa).

It belongs to the eukaryotic ribosomal protein eL8 family. In terms of assembly, part of the 50S ribosomal subunit. Probably part of the RNase P complex.

The protein localises to the cytoplasm. Functionally, multifunctional RNA-binding protein that recognizes the K-turn motif in ribosomal RNA, the RNA component of RNase P, box H/ACA, box C/D and box C'/D' sRNAs. This is Large ribosomal subunit protein eL8 from Thermoplasma volcanium (strain ATCC 51530 / DSM 4299 / JCM 9571 / NBRC 15438 / GSS1).